The following is a 222-amino-acid chain: Ribosomal RNA large subunit methyltransferase E (222 aa).

Basic and acidic residues predominate over residues 1-13 (MSRSDKNPHERLK). Positions 1–22 (MSRSDKNPHERLKTAKKRTASS) are disordered. The S-adenosyl-L-methionine site is built by Gly75, Trp77, Asp94, Asp110, and Asp134. Catalysis depends on Lys174, which acts as the Proton acceptor.

Belongs to the class I-like SAM-binding methyltransferase superfamily. RNA methyltransferase RlmE family.

The protein localises to the cytoplasm. It catalyses the reaction uridine(2552) in 23S rRNA + S-adenosyl-L-methionine = 2'-O-methyluridine(2552) in 23S rRNA + S-adenosyl-L-homocysteine + H(+). Functionally, specifically methylates the uridine in position 2552 of 23S rRNA at the 2'-O position of the ribose in the fully assembled 50S ribosomal subunit. The protein is Ribosomal RNA large subunit methyltransferase E of Novosphingobium aromaticivorans (strain ATCC 700278 / DSM 12444 / CCUG 56034 / CIP 105152 / NBRC 16084 / F199).